Reading from the N-terminus, the 600-residue chain is NADH-ubiquinone oxidoreductase chain 5 (600 aa).

16 consecutive transmembrane segments (helical) span residues 1–21 (MYILVLTVPLLGALVSGLFGR), 27–47 (GAGIFTSGCLIISLSWSLLIF), 81–101 (LTAVMLIVVTSISTLVHIFST), 110–130 (VPRFMSYLSLFTFFMILLVTS), 136–156 (LFIGWEGVGLCSYLLINFWLT), 178–198 (FVLAMLAIWDQFGCLDFASVF), 200–220 (IVALAPSDNTTLICLFLFIGA), 241–261 (TPVSALIHAATMVTAGVFLLI), 274–294 (LMVVTIVGSLTAFMAATIGLV), 301–323 (VIAYSTCSQLGYMVMACGLSQYS), 327–347 (FHLMNHAFFKALLFLSAGSVI), 366–386 (IPFTYTMIVIGSLSLMGFPYL), 404–424 (YLAFAHWLGVFSALLTAAYSL), 450–470 (WNLTLPLILLALGSIFVGYLT), 488–508 (SIKLMPVIFSLFGAGTAVVLY), and 520–540 (SPVGLAGYTFLYSAWQFNYII).

The protein belongs to the complex I subunit 5 family.

It is found in the mitochondrion inner membrane. It catalyses the reaction a ubiquinone + NADH + 5 H(+)(in) = a ubiquinol + NAD(+) + 4 H(+)(out). In terms of biological role, core subunit of the mitochondrial membrane respiratory chain NADH dehydrogenase (Complex I) that is believed to belong to the minimal assembly required for catalysis. Complex I functions in the transfer of electrons from NADH to the respiratory chain. The immediate electron acceptor for the enzyme is believed to be ubiquinone. In Metridium senile (Brown sea anemone), this protein is NADH-ubiquinone oxidoreductase chain 5 (ND5).